We begin with the raw amino-acid sequence, 305 residues long: Glutaminase (305 aa).

Substrate contacts are provided by Ser61, Asn113, Glu158, Asn165, Tyr189, Tyr241, and Val259.

This sequence belongs to the glutaminase family. Homotetramer.

It carries out the reaction L-glutamine + H2O = L-glutamate + NH4(+). The chain is Glutaminase from Clostridium botulinum (strain Loch Maree / Type A3).